The sequence spans 161 residues: Peripheral myelin protein 22 (161 aa).

Residue M1 is a topological domain, cytoplasmic. A helical transmembrane segment spans residues 2–31; it reads LLLLLGILFLHIAVLVLLFVSTIVSQWLVG. Residues 32-64 are Extracellular-facing; sequence NGHTTDLWQNCTTSALGAVQHCYSSSVSEWLQS. The N-linked (GlcNAc...) asparagine glycan is linked to N41. The helical transmembrane segment at 65–91 threads the bilayer; it reads VQATMILSVIFSVLALFLFFCQLFTLT. The Cytoplasmic portion of the chain corresponds to 92 to 95; that stretch reads KGGR. A helical transmembrane segment spans residues 96-119; it reads FYITGFFQILAGLCVMSAAAIYTV. The Extracellular segment spans residues 120-133; sequence RHSEWHVNTDYSYG. Residues 134 to 156 form a helical membrane-spanning segment; sequence FAYILAWVAFPLALLSGIIYVIL. Over 157–160 the chain is Cytoplasmic; sequence RKRE.

This sequence belongs to the PMP-22/EMP/MP20 family. Post-translationally, ubiquitinated by the DCX(DCAF13) E3 ubiquitin ligase complex, leading to its degradation. Schwann cells of the peripheral nervous system. Expressed at growth arrest of mammalian fibroblasts.

It is found in the cell membrane. Might be involved in growth regulation, and in myelinization in the peripheral nervous system. In Mus musculus (Mouse), this protein is Peripheral myelin protein 22 (Pmp22).